The primary structure comprises 191 residues: MYQDLIRSELNEAAEVLNKFLSDDHNIAQIEAAAKMIADSFKQDGKVLSCGNGGSHCDAMHFAEELTGRYRDNRPGYAGIAISDPSHLSCVSNDFGYDFVFSRYVEAVGRKGDVLFGLSTSGNSGNILKAIEAAKAKGMKTVALTGKDGGKMAGLADVEIRVPHFGYADRIQEVHIKIIHIIIQLIEKEME.

The SIS domain maps to 37–191; it reads IADSFKQDGK…IIQLIEKEME (155 aa). 52-54 provides a ligand contact to substrate; it reads NGG. 2 residues coordinate Zn(2+): His61 and Glu65. Residues Glu65, 93–94, 119–121, Ser124, and Gln172 contribute to the substrate site; these read ND and STS. Gln172 and His180 together coordinate Zn(2+).

Belongs to the SIS family. GmhA subfamily. In terms of assembly, homotetramer. The cofactor is Zn(2+).

Its subcellular location is the cytoplasm. It carries out the reaction 2 D-sedoheptulose 7-phosphate = D-glycero-alpha-D-manno-heptose 7-phosphate + D-glycero-beta-D-manno-heptose 7-phosphate. Its pathway is carbohydrate biosynthesis; D-glycero-D-manno-heptose 7-phosphate biosynthesis; D-glycero-alpha-D-manno-heptose 7-phosphate and D-glycero-beta-D-manno-heptose 7-phosphate from sedoheptulose 7-phosphate: step 1/1. It functions in the pathway bacterial outer membrane biogenesis; LPS core biosynthesis. Functionally, catalyzes the isomerization of sedoheptulose 7-phosphate in D-glycero-D-manno-heptose 7-phosphate. This is Phosphoheptose isomerase from Vibrio parahaemolyticus serotype O3:K6 (strain RIMD 2210633).